Consider the following 1648-residue polypeptide: eIF-2-alpha kinase GCN2 (1648 aa).

The interval 1-26 (MAGGRGASGRGRAEPQESYSQRQDHE) is disordered. One can recognise an RWD domain in the interval 25–137 (HELQALEAIY…HHVQSFLSEH (113 aa)). Positions 146 to 205 (HEEMLERQAQEKQQRLLEARRKEEQEQREILHEIQRRKEEIKEEKKRKEMAKQERLEITS) form a coiled coil. At S230 the chain carries Phosphoserine. Protein kinase domains follow at residues 286–538 (VGSD…HSFI) and 589–1000 (FEEL…SELL). Residues 595–603 (LGKGAFGAV) and K618 each bind ATP. The interval 661–784 (PAVPGTPPPD…CNQKDGSHEI (124 aa)) is disordered. T666 is modified (phosphothreonine). 2 stretches are compositionally biased toward polar residues: residues 673-686 (PQAQ…GKTS) and 704-722 (LSSS…STRF). 2 stretches are compositionally biased toward acidic residues: residues 730–739 (SSDEEDEDER) and 753–763 (SDSDIIFDNED). Residues 775-784 (CNQKDGSHEI) are compositionally biased toward basic and acidic residues. D846 serves as the catalytic Proton acceptor. The residue at position 869 (T869) is a Phosphothreonine. Residues T898 and T903 each carry the phosphothreonine; by autocatalysis modification. The histidyl-tRNA synthetase-like stretch occupies residues 1021–1492 (IDGKAYRTMM…DHVMQKLRTK (472 aa)). The residue at position 1258 (K1258) is an N6-acetyllysine.

The protein belongs to the protein kinase superfamily. Ser/Thr protein kinase family. GCN2 subfamily. As to quaternary structure, homodimer; homodimerization is important for kinase activation by uncharged tRNAs. Interacts with GCN1; this interaction stimulates EIF2AK4/GCN2 kinase activity and is impaired by IMPACT upon a variety of stress conditions, such as amino acid depletion, UV-C irradiation, proteasome inhibitor treatment and glucose deprivation. Interacts with DNAJC3; this interaction inhibits EIF2AK4/GCN2 kinase activity during endoplasmic reticulum (ER), hypothermic and amino acid-starving stress conditions. Interacts with MAP3K20; activates EIF2AK4/GCN2 kinase activity in response to moderate ribotoxic stress. Post-translationally, autophosphorylated; autophosphorylation on Thr-898 is increased upon amino acid starvation and in UV irradiation cells and inhibited in presence of IMPACT. As to expression, expressed in liver. Expressed predominantly in the hippocampal CA1 region and the dentate gyrus, and to a lesser degree in CA3 (at protein level). Expressed in liver, lung, brain, kidney, skeletal muscle and testis. Expressed weakly in heart and spleen. Expressed in the hippocampal CA1 and CA3 regions, the dentate gyrus and cerebellum. Isoform 1 is widely expressed. Isoform 1 is expressed in brain, liver, skeletal muscle and testis. Isoform 3 is expressed in lung, brain, testis, prostate and choroid plexus. Isoform 4 is expressed in muscle, lung, kidney, brain, testis and prostate.

The protein resides in the cytoplasm. The enzyme catalyses L-seryl-[protein] + ATP = O-phospho-L-seryl-[protein] + ADP + H(+). It carries out the reaction L-threonyl-[protein] + ATP = O-phospho-L-threonyl-[protein] + ADP + H(+). With respect to regulation, (Microbial infection) Kinase activity is enhanced by alphavirus genomic RNA sequences. Kinase activity is stimulated upon binding to uncharged tRNAs. Activated by serum starvation (in vitro). Metabolic-stress sensing protein kinase that phosphorylates the alpha subunit of eukaryotic translation initiation factor 2 (EIF2S1/eIF-2-alpha) in response to low amino acid availability. Plays a role as an activator of the integrated stress response (ISR) required for adaptation to amino acid starvation. EIF2S1/eIF-2-alpha phosphorylation in response to stress converts EIF2S1/eIF-2-alpha into a global protein synthesis inhibitor, leading to a global attenuation of cap-dependent translation, and thus to a reduced overall utilization of amino acids, while concomitantly initiating the preferential translation of ISR-specific mRNAs, such as the transcriptional activator ATF4, and hence allowing ATF4-mediated reprogramming of amino acid biosynthetic gene expression to alleviate nutrient depletion. Required for the translational induction of protein kinase PRKCH following amino acid starvation. Binds uncharged tRNAs. Involved in cell cycle arrest by promoting cyclin D1 mRNA translation repression after the unfolded protein response pathway (UPR) activation or cell cycle inhibitor CDKN1A/p21 mRNA translation activation in response to amino acid deprivation. Plays a role in the consolidation of synaptic plasticity, learning as well as formation of long-term memory. Plays a role in neurite outgrowth inhibition. Plays a role in feeding behavior to maintain amino acid homeostasis; contributes to the innate aversion toward diets of imbalanced amino acid composition. Plays a proapoptotic role in response to glucose deprivation. Promotes global cellular protein synthesis repression in response to UV irradiation independently of the stress-activated protein kinase/c-Jun N-terminal kinase (SAPK/JNK) and p38 MAPK signaling pathways. Its function is as follows. (Microbial infection) Plays a role in the antiviral response against alphavirus infection; impairs early viral mRNA translation of the incoming genomic virus RNA, thus preventing alphavirus replication. In terms of biological role, (Microbial infection) Plays a role in modulating the adaptive immune response to Yellow fever virus infection; promotes dendritic cells to initiate autophagy and antigene presentation to both CD4(+) and CD8(+) T-cells under amino acid starvation. This Mus musculus (Mouse) protein is eIF-2-alpha kinase GCN2.